The sequence spans 172 residues: C-phycocyanin beta chain (172 aa).

Asn-72 is subject to N4-methylasparagine. (2R,3E)-phycocyanobilin-binding residues include Cys-82 and Cys-153.

The protein belongs to the phycobiliprotein family. Heterodimer of an alpha and a beta subunit, which further assembles into trimers and the trimers into hexamers. The basic functional unit of phycobiliproteins is a ring-shaped hexamer formed from two back-to-back trimers contacting via the alpha chain subunits. The trimers are composed of alpha/beta subunit heterodimers arranged around a three-fold axis of symmetry. The phycoerythrins also contain a gamma subunit which is located in the center of the hexamer. In terms of processing, contains two covalently linked bilin chromophores.

The protein resides in the plastid. It localises to the chloroplast thylakoid membrane. Light-harvesting photosynthetic bile pigment-protein from the phycobiliprotein complex (phycobilisome, PBS). Phycocyanin is the major phycobiliprotein in the PBS rod. The protein is C-phycocyanin beta chain (cpcB) of Aglaothamnion neglectum (Red alga).